We begin with the raw amino-acid sequence, 1829 residues long: DNA polymerase (1829 aa).

2 DOD-type homing endonuclease domains span residues 527–668 and 1136–1269; these read LSGI…SLGI and FLGY…SLGV.

The protein belongs to the DNA polymerase type-B family. In terms of processing, this protein undergoes a protein self splicing that involves a post-translational excision of the three intervening regions (inteins) followed by peptide ligation.

The enzyme catalyses DNA(n) + a 2'-deoxyribonucleoside 5'-triphosphate = DNA(n+1) + diphosphate. The chain is DNA polymerase (pol) from Thermococcus aggregans.